The chain runs to 388 residues: Transcription factor TB1 (388 aa).

A TCP domain is found at 115-173; the sequence is RKDRHSKISTAGGMRDRRMRLSLDVARKFFALQDMLGFDKASKTVQWLLNMSKAAIREI. Disordered regions lie at residues 180-269 and 289-331; these read SVCE…EKNR and AAGE…VGVS. The segment covering 187–201 has biased composition (polar residues); sequence SSSLSVDGKQQQHSN. 2 stretches are compositionally biased toward basic and acidic residues: residues 210–224 and 247–269; these read GDHK…DGKK and VPDK…EKNR. In terms of domain architecture, R spans 250 to 267; sequence KESRAKARERARERTKEK. Positions 289 to 314 are enriched in low complexity; it reads AAGEDKSPTSPSNNLNHSSSTNLVST.

As to quaternary structure, interacts with MADS57. Expressed in the axillary bud of the first formed leaf node. Expressed in axillary buds, shoot apical meristem, young leaves, vascular tissues and the tips of crown roots.

Its subcellular location is the nucleus. Its function is as follows. Probable transcription factor that functions as a negative regulator of lateral branching, presumably through its expression in axillary buds. Involved in the fine tuning of shoot branching. May function as an integrator of multiple signaling pathways to regulate the development of axillary buds. Works partially downstream of strigolactones to inhibit bud outgrowth. Binds to MADS57 to suppress the negative regulation of D14 by MADS57 and balance the expression of D14 for tillering. This is Transcription factor TB1 from Oryza sativa subsp. japonica (Rice).